We begin with the raw amino-acid sequence, 1104 residues long: Carbamoyl phosphate synthase large chain (1104 aa).

The carboxyphosphate synthetic domain stretch occupies residues 1-403; the sequence is MPRRQDIQKI…SFQKALRSLE (403 aa). ATP-binding residues include Arg-129, Arg-170, Gly-176, Gly-177, Gln-209, Leu-211, Glu-216, Gly-242, Ile-243, His-244, Gln-286, and Glu-300. The ATP-grasp 1 domain occupies 133–329; sequence NEAMDKIGVK…IAKMAAKLAV (197 aa). Positions 286, 300, and 302 each coordinate Mg(2+). The Mn(2+) site is built by Gln-286, Glu-300, and Asn-302. The interval 404-552 is oligomerization domain; that stretch reads TGRAGWGCDK…YSTYEEETEV (149 aa). The interval 553 to 966 is carbamoyl phosphate synthetic domain; sequence IPASKPKVMI…AFAKAELGAG (414 aa). In terms of domain architecture, ATP-grasp 2 spans 703–900; it reads EKILQKLNIS…LAKLASLIMS (198 aa). ATP is bound by residues Arg-739, Lys-778, Leu-780, Glu-785, Gly-811, Ile-812, His-813, Ser-814, Gln-854, and Glu-871. Mg(2+)-binding residues include Gln-854, Glu-871, and Asn-873. Positions 854, 871, and 873 each coordinate Mn(2+). An MGS-like domain is found at 967-1104; the sequence is ERLPLTGTVF…KTIQEYCPNF (138 aa). Residues 967–1104 form an allosteric domain region; sequence ERLPLTGTVF…KTIQEYCPNF (138 aa).

Belongs to the CarB family. Composed of two chains; the small (or glutamine) chain promotes the hydrolysis of glutamine to ammonia, which is used by the large (or ammonia) chain to synthesize carbamoyl phosphate. Tetramer of heterodimers (alpha,beta)4. Requires Mg(2+) as cofactor. It depends on Mn(2+) as a cofactor.

It catalyses the reaction hydrogencarbonate + L-glutamine + 2 ATP + H2O = carbamoyl phosphate + L-glutamate + 2 ADP + phosphate + 2 H(+). It carries out the reaction hydrogencarbonate + NH4(+) + 2 ATP = carbamoyl phosphate + 2 ADP + phosphate + 2 H(+). The protein operates within amino-acid biosynthesis; L-arginine biosynthesis; carbamoyl phosphate from bicarbonate: step 1/1. It participates in pyrimidine metabolism; UMP biosynthesis via de novo pathway; (S)-dihydroorotate from bicarbonate: step 1/3. Large subunit of the glutamine-dependent carbamoyl phosphate synthetase (CPSase). CPSase catalyzes the formation of carbamoyl phosphate from the ammonia moiety of glutamine, carbonate, and phosphate donated by ATP, constituting the first step of 2 biosynthetic pathways, one leading to arginine and/or urea and the other to pyrimidine nucleotides. The large subunit (synthetase) binds the substrates ammonia (free or transferred from glutamine from the small subunit), hydrogencarbonate and ATP and carries out an ATP-coupled ligase reaction, activating hydrogencarbonate by forming carboxy phosphate which reacts with ammonia to form carbamoyl phosphate. The protein is Carbamoyl phosphate synthase large chain of Nostoc sp. (strain PCC 7120 / SAG 25.82 / UTEX 2576).